Here is a 709-residue protein sequence, read N- to C-terminus: ATP-dependent RNA helicase dbp7 (709 aa).

The tract at residues D13–K90 is disordered. Basic and acidic residues predominate over residues Q16–R34. The span at N44–K65 shows a compositional bias: polar residues. Residues N66–K90 show a composition bias toward basic and acidic residues. The short motif at T138–S167 is the Q motif element. The Helicase ATP-binding domain maps to A172–L366. A185–T192 provides a ligand contact to ATP. The short motif at D301–D304 is the DEAD box element. One can recognise a Helicase C-terminal domain in the interval L404–L580. The disordered stretch occupies residues G662–I690.

Belongs to the DEAD box helicase family. DDX31/DBP7 subfamily.

It is found in the nucleus. The protein localises to the nucleolus. The catalysed reaction is ATP + H2O = ADP + phosphate + H(+). In terms of biological role, ATP-binding RNA helicase involved in the biogenesis of 60S ribosomal subunits and is required for the normal formation of 25S and 5.8S rRNAs. This chain is ATP-dependent RNA helicase dbp7 (dbp7), found in Schizosaccharomyces pombe (strain 972 / ATCC 24843) (Fission yeast).